Here is a 424-residue protein sequence, read N- to C-terminus: Double homeobox protein 4-like protein 2 (424 aa).

Residues 1 to 10 (MALPTPSDST) show a composition bias toward polar residues. Disordered stretches follow at residues 1–24 (MALP…RRRL), 72–102 (SRQL…TAVT), 148–167 (RHPG…CSAA), 218–362 (LQPS…LQEP), and 388–414 (QPLL…PLSE). 2 consecutive DNA-binding regions (homeobox) follow at residues 19 to 78 (GRRR…LRQH) and 94 to 153 (GRRK…PGQG). Residues 265–274 (KSREDRDPQR) show a composition bias toward basic and acidic residues. Composition is skewed to low complexity over residues 278-302 (PGPC…LAPP) and 319-329 (AGAAWEPQAGA).

Its subcellular location is the nucleus. Its function is as follows. May be involved in transcriptional regulation. This chain is Double homeobox protein 4-like protein 2 (DUX4L2), found in Homo sapiens (Human).